Reading from the N-terminus, the 95-residue chain is MLPVSKQQDDLLLNLYIQPKASRDQIVGVHGEELKIAITAPPVDGKANAHLIKYLSKAFKVPKGDIVILKGQLGRHKQIKILSPRLIPEIINALL.

It belongs to the UPF0235 family.

The protein is UPF0235 protein Ssed_1229 of Shewanella sediminis (strain HAW-EB3).